A 48-amino-acid chain; its full sequence is Phosphatidylserine decarboxylase proenzyme (48 aa).

This sequence belongs to the phosphatidylserine decarboxylase family. Type 1 subfamily. Requires pyruvate as cofactor.

It carries out the reaction a 1,2-diacyl-sn-glycero-3-phospho-L-serine + H(+) = a 1,2-diacyl-sn-glycero-3-phosphoethanolamine + CO2. Its pathway is phospholipid metabolism; phosphatidylethanolamine biosynthesis; phosphatidylethanolamine from CDP-diacylglycerol: step 2/2. In Azotobacter vinelandii, this protein is Phosphatidylserine decarboxylase proenzyme (psd).